The primary structure comprises 287 residues: Probable endonuclease 4 (287 aa).

Zn(2+) contacts are provided by H69, H109, E146, D180, H183, H217, D230, H232, and E262.

It belongs to the AP endonuclease 2 family. Requires Zn(2+) as cofactor.

The enzyme catalyses Endonucleolytic cleavage to 5'-phosphooligonucleotide end-products.. Endonuclease IV plays a role in DNA repair. It cleaves phosphodiester bonds at apurinic or apyrimidinic (AP) sites, generating a 3'-hydroxyl group and a 5'-terminal sugar phosphate. In Petrotoga mobilis (strain DSM 10674 / SJ95), this protein is Probable endonuclease 4.